Consider the following 252-residue polypeptide: 4-formylbenzenesulfonate dehydrogenase TsaC1/TsaC2 (252 aa).

Residues 9-36 (IVTG…LVAD) and Asp-62 each bind NAD(+). A substrate-binding site is contributed by Ser-142. Residue Tyr-155 is the Proton acceptor of the active site. Lys-159 contacts NAD(+).

This sequence belongs to the short-chain dehydrogenases/reductases (SDR) family. In terms of assembly, homodimer.

It catalyses the reaction 4-formylbenzenesulfonate + NAD(+) + H2O = 4-sulfobenzoate + NADH + 2 H(+). Its function is as follows. Involved in the toluene-4-sulfonate degradation pathway. Does not discriminate between the sulfonate and the carboxyl substituents and can also be involved in the p-toluenecarboxylate degradation pathway. This Comamonas testosteroni (Pseudomonas testosteroni) protein is 4-formylbenzenesulfonate dehydrogenase TsaC1/TsaC2 (tsaC1).